The following is a 282-amino-acid chain: Phosphatidylglycerol--prolipoprotein diacylglyceryl transferase (282 aa).

Transmembrane regions (helical) follow at residues 19-39 (IGPF…VFGW), 58-78 (ISLV…ILGG), and 104-124 (GGMS…WFAY). Arginine 149 contacts a 1,2-diacyl-sn-glycero-3-phospho-(1'-sn-glycerol). The next 3 helical transmembrane spans lie at 190–210 (AGME…LGAL), 214–234 (GMIL…GEHF), and 250–270 (MGML…VLAI).

Belongs to the Lgt family.

Its subcellular location is the cell inner membrane. The enzyme catalyses L-cysteinyl-[prolipoprotein] + a 1,2-diacyl-sn-glycero-3-phospho-(1'-sn-glycerol) = an S-1,2-diacyl-sn-glyceryl-L-cysteinyl-[prolipoprotein] + sn-glycerol 1-phosphate + H(+). The protein operates within protein modification; lipoprotein biosynthesis (diacylglyceryl transfer). In terms of biological role, catalyzes the transfer of the diacylglyceryl group from phosphatidylglycerol to the sulfhydryl group of the N-terminal cysteine of a prolipoprotein, the first step in the formation of mature lipoproteins. This chain is Phosphatidylglycerol--prolipoprotein diacylglyceryl transferase, found in Bradyrhizobium diazoefficiens (strain JCM 10833 / BCRC 13528 / IAM 13628 / NBRC 14792 / USDA 110).